A 261-amino-acid polypeptide reads, in one-letter code: Imidazole glycerol phosphate synthase subunit HisF (261 aa).

Residues Asp16 and Asp135 contribute to the active site.

It belongs to the HisA/HisF family. In terms of assembly, heterodimer of HisH and HisF.

It is found in the cytoplasm. It carries out the reaction 5-[(5-phospho-1-deoxy-D-ribulos-1-ylimino)methylamino]-1-(5-phospho-beta-D-ribosyl)imidazole-4-carboxamide + L-glutamine = D-erythro-1-(imidazol-4-yl)glycerol 3-phosphate + 5-amino-1-(5-phospho-beta-D-ribosyl)imidazole-4-carboxamide + L-glutamate + H(+). It participates in amino-acid biosynthesis; L-histidine biosynthesis; L-histidine from 5-phospho-alpha-D-ribose 1-diphosphate: step 5/9. Functionally, IGPS catalyzes the conversion of PRFAR and glutamine to IGP, AICAR and glutamate. The HisF subunit catalyzes the cyclization activity that produces IGP and AICAR from PRFAR using the ammonia provided by the HisH subunit. This Mycobacterium marinum (strain ATCC BAA-535 / M) protein is Imidazole glycerol phosphate synthase subunit HisF.